A 375-amino-acid chain; its full sequence is Chaperone protein DnaJ (375 aa).

One can recognise a J domain in the interval 5 to 70 (DYYEVLGVER…GKRSAYDQYG (66 aa)). The segment at 134-212 (GTTVTIRVPT…CHGQGRVEES (79 aa)) adopts a CR-type zinc-finger fold. Residues Cys147, Cys150, Cys164, Cys167, Cys186, Cys189, Cys200, and Cys203 each contribute to the Zn(2+) site. CXXCXGXG motif repeat units lie at residues 147-154 (CKTCDGTG), 164-171 (CTTCGGIG), 186-193 (CPRCHGSG), and 200-207 (CGSCHGQG).

The protein belongs to the DnaJ family. In terms of assembly, homodimer. The cofactor is Zn(2+).

The protein resides in the cytoplasm. Its function is as follows. Participates actively in the response to hyperosmotic and heat shock by preventing the aggregation of stress-denatured proteins and by disaggregating proteins, also in an autonomous, DnaK-independent fashion. Unfolded proteins bind initially to DnaJ; upon interaction with the DnaJ-bound protein, DnaK hydrolyzes its bound ATP, resulting in the formation of a stable complex. GrpE releases ADP from DnaK; ATP binding to DnaK triggers the release of the substrate protein, thus completing the reaction cycle. Several rounds of ATP-dependent interactions between DnaJ, DnaK and GrpE are required for fully efficient folding. Also involved, together with DnaK and GrpE, in the DNA replication of plasmids through activation of initiation proteins. This Ectopseudomonas mendocina (strain ymp) (Pseudomonas mendocina) protein is Chaperone protein DnaJ.